The following is a 379-amino-acid chain: Bifunctional riboflavin kinase/FMN phosphatase (379 aa).

Residue Ser2 is modified to N-acetylserine. Asp17 functions as the Nucleophile; for FMN phosphatase activity in the catalytic mechanism. Residues Asp17 and Asp19 each contribute to the Mg(2+) site. Asp19 serves as the catalytic Proton donor; for FMN phosphatase activity. Residues Gly248, Lys254, Thr260, and Asn262 each contribute to the ATP site. Thr260 contacts Mg(2+). Glu312 (nucleophile; for riboflavin kinase activity) is an active-site residue. 3 residues coordinate ATP: Leu315, His317, and Tyr324. Positions 337 and 342 each coordinate FMN.

This sequence in the N-terminal section; belongs to the HAD-like hydrolase superfamily. CbbY/CbbZ/Gph/YieH family. In the C-terminal section; belongs to the flavokinase family. As to quaternary structure, monomer. It depends on Mg(2+) as a cofactor.

It catalyses the reaction riboflavin + ATP = FMN + ADP + H(+). The catalysed reaction is FMN + H2O = riboflavin + phosphate. Its pathway is cofactor biosynthesis; FMN biosynthesis; FMN from riboflavin (ATP route): step 1/1. In terms of biological role, bifunctional enzyme that catalyzes the hydrolysis of flavin-mononucleotide (FMN) to riboflavin (vitamin B2) and the phosphorylation of riboflavin to form (FMN) coenzyme. The sequence is that of Bifunctional riboflavin kinase/FMN phosphatase from Arabidopsis thaliana (Mouse-ear cress).